A 539-amino-acid polypeptide reads, in one-letter code: Nucleobase-ascorbate transporter 8 (539 aa).

A disordered region spans residues 1-20 (MAGDGVENAKPPQKQEDLQP). The next 12 membrane-spanning stretches (helical) occupy residues 44-64 (ILLG…IPTM), 79-99 (LIQT…FFGT), 101-121 (LPAV…IVLA), 141-161 (IQGA…SGLW), 167-187 (FLSP…LYEQ), 189-209 (FPML…LVIF), 229-249 (FAVI…TIGG), 295-315 (IFAM…TYIA), 368-388 (VGSR…SILG), 399-421 (APIV…LSLI), 433-453 (FILG…YQYT), and 470-490 (NIIN…AFFL).

This sequence belongs to the nucleobase:cation symporter-2 (NCS2) (TC 2.A.40) family. In terms of tissue distribution, highly expressed in ovules, endosperm and embryo.

The protein localises to the cell membrane. The protein is Nucleobase-ascorbate transporter 8 (NAT8) of Arabidopsis thaliana (Mouse-ear cress).